The primary structure comprises 250 residues: 2,3-bisphosphoglycerate-dependent phosphoglycerate mutase (250 aa).

Residues 12 to 19 (RHGQSAWN), 25 to 26 (TG), Arg-64, 91 to 94 (ERHY), Lys-102, 118 to 119 (RR), and 185 to 186 (GN) each bind substrate. His-13 serves as the catalytic Tele-phosphohistidine intermediate. Glu-91 serves as the catalytic Proton donor/acceptor.

This sequence belongs to the phosphoglycerate mutase family. BPG-dependent PGAM subfamily.

It catalyses the reaction (2R)-2-phosphoglycerate = (2R)-3-phosphoglycerate. It participates in carbohydrate degradation; glycolysis; pyruvate from D-glyceraldehyde 3-phosphate: step 3/5. Catalyzes the interconversion of 2-phosphoglycerate and 3-phosphoglycerate. This is 2,3-bisphosphoglycerate-dependent phosphoglycerate mutase from Corynebacterium efficiens (strain DSM 44549 / YS-314 / AJ 12310 / JCM 11189 / NBRC 100395).